Consider the following 298-residue polypeptide: Elongation factor Ts (298 aa).

Residues 79 to 82 (TDFV) form an involved in Mg(2+) ion dislocation from EF-Tu region.

The protein belongs to the EF-Ts family.

The protein resides in the cytoplasm. Functionally, associates with the EF-Tu.GDP complex and induces the exchange of GDP to GTP. It remains bound to the aminoacyl-tRNA.EF-Tu.GTP complex up to the GTP hydrolysis stage on the ribosome. In Mycoplasma pneumoniae (strain ATCC 29342 / M129 / Subtype 1) (Mycoplasmoides pneumoniae), this protein is Elongation factor Ts (tsf).